A 130-amino-acid chain; its full sequence is Protein ApaG (130 aa).

The 125-residue stretch at 3–127 (SAVTRGIEVT…FSLDVPEQRR (125 aa)) folds into the ApaG domain.

The chain is Protein ApaG from Brucella suis biovar 1 (strain 1330).